Here is a 253-residue protein sequence, read N- to C-terminus: uncharacterized protein (253 aa).

Residue 10–35 (ISGAASKRGIGRATAELFASHGARVA) coordinates NADP(+). Ser-144 contributes to the substrate binding site. The Proton acceptor role is filled by Tyr-159.

Belongs to the short-chain dehydrogenases/reductases (SDR) family.

This is an uncharacterized protein from Sinorhizobium fredii (strain NBRC 101917 / NGR234).